Here is a 342-residue protein sequence, read N- to C-terminus: tRNA N6-adenosine threonylcarbamoyltransferase (342 aa).

Fe cation contacts are provided by histidine 111 and histidine 115. Residues 134-138 (LVSGG), aspartate 167, glycine 180, and asparagine 277 each bind substrate. A Fe cation-binding site is contributed by aspartate 305.

Belongs to the KAE1 / TsaD family. Requires Fe(2+) as cofactor.

The protein resides in the cytoplasm. The catalysed reaction is L-threonylcarbamoyladenylate + adenosine(37) in tRNA = N(6)-L-threonylcarbamoyladenosine(37) in tRNA + AMP + H(+). In terms of biological role, required for the formation of a threonylcarbamoyl group on adenosine at position 37 (t(6)A37) in tRNAs that read codons beginning with adenine. Is involved in the transfer of the threonylcarbamoyl moiety of threonylcarbamoyl-AMP (TC-AMP) to the N6 group of A37, together with TsaE and TsaB. TsaD likely plays a direct catalytic role in this reaction. The sequence is that of tRNA N6-adenosine threonylcarbamoyltransferase from Histophilus somni (strain 2336) (Haemophilus somnus).